A 297-amino-acid polypeptide reads, in one-letter code: MNWISNVVRPKIRSFLNRRDVPENLWVKCPETGQMVFHKDLEANQYVIPGSGFHMRMGPADRLKATFDDGAYEEVALPDVPIDPLKFRDERRYIDRLKDARAKTGAQDAVKVAHGLLEGLPVTVAVQDFGFMGGSLGMAAGEAVVTGLFTAAEKKTPFIMFAASGGARMQEGILSLMQMPRTTVAIQELREARLPYIVVLTNPTTGGVTASYAMLGDVQIAEPGALIGFAGPRVIEQTIREKLPDGFQRSEYLFEHGMIDMVVHRHQMRETLARVCRLMMKAPGVPPKGRLPAPAAA.

The CoA carboxyltransferase N-terminal domain occupies 25–294; sequence LWVKCPETGQ…VPPKGRLPAP (270 aa).

Belongs to the AccD/PCCB family. As to quaternary structure, acetyl-CoA carboxylase is a heterohexamer composed of biotin carboxyl carrier protein (AccB), biotin carboxylase (AccC) and two subunits each of ACCase subunit alpha (AccA) and ACCase subunit beta (AccD).

The protein localises to the cytoplasm. It carries out the reaction N(6)-carboxybiotinyl-L-lysyl-[protein] + acetyl-CoA = N(6)-biotinyl-L-lysyl-[protein] + malonyl-CoA. The protein operates within lipid metabolism; malonyl-CoA biosynthesis; malonyl-CoA from acetyl-CoA: step 1/1. Functionally, component of the acetyl coenzyme A carboxylase (ACC) complex. Biotin carboxylase (BC) catalyzes the carboxylation of biotin on its carrier protein (BCCP) and then the CO(2) group is transferred by the transcarboxylase to acetyl-CoA to form malonyl-CoA. The polypeptide is Acetyl-coenzyme A carboxylase carboxyl transferase subunit beta (Azorhizobium caulinodans (strain ATCC 43989 / DSM 5975 / JCM 20966 / LMG 6465 / NBRC 14845 / NCIMB 13405 / ORS 571)).